A 264-amino-acid chain; its full sequence is Outer kinetochore KNL1 complex subunit sos7 (264 aa).

A coiled-coil region spans residues 90–236; the sequence is EAEDNEKLET…SNQIKAAIHT (147 aa).

The protein belongs to the KRE28 family. As to quaternary structure, component of the KNL1/SPC105 complex composed of at least spc7 and sos7. Part of the outer kinetochore KMN network that includes the KNL1, MIS12 and NDC80 complexes. Interacts (via C-terminus) with spc7 (via C-terminus); the interaction is direct.

The protein localises to the nucleus. Its subcellular location is the chromosome. The protein resides in the centromere. It is found in the kinetochore. Functionally, acts as a component of the outer kinetochore KNL1 complex that facilitates microtubule-kinetochore interactions and the spindle assembly checkpoint. Kinetochores, consisting of a centromere-associated inner segment and a microtubule-contacting outer segment, play a crucial role in chromosome segregation by mediating the physical connection between centromeric DNA and spindle microtubules. The outer kinetochore is made up of the ten-subunit KMN network, comprising the MIS12, NDC80 and KNL1 complexes, and auxiliary microtubule-associated components; together they connect the outer kinetochore with the inner kinetochore, bind microtubules, and mediate interactions with mitotic checkpoint proteins that delay anaphase until chromosomes are bioriented on the spindle. This is Outer kinetochore KNL1 complex subunit sos7 (sos7) from Schizosaccharomyces pombe (strain 972 / ATCC 24843) (Fission yeast).